Reading from the N-terminus, the 309-residue chain is HPr kinase/phosphorylase (309 aa).

Catalysis depends on residues histidine 138 and lysine 159. ATP is bound at residue 153 to 160 (GQSGVGKS). Serine 160 provides a ligand contact to Mg(2+). Aspartate 177 (proton acceptor; for phosphorylation activity. Proton donor; for dephosphorylation activity) is an active-site residue. Residues 201–210 (LEIRGLGIIN) are important for the catalytic mechanism of both phosphorylation and dephosphorylation. Position 202 (glutamate 202) interacts with Mg(2+). The active site involves arginine 243. The important for the catalytic mechanism of dephosphorylation stretch occupies residues 264–269 (PVRPGR).

The protein belongs to the HPrK/P family. As to quaternary structure, homohexamer. It depends on Mg(2+) as a cofactor.

The catalysed reaction is [HPr protein]-L-serine + ATP = [HPr protein]-O-phospho-L-serine + ADP + H(+). The enzyme catalyses [HPr protein]-O-phospho-L-serine + phosphate + H(+) = [HPr protein]-L-serine + diphosphate. In terms of biological role, catalyzes the ATP- as well as the pyrophosphate-dependent phosphorylation of a specific serine residue in HPr, a phosphocarrier protein of the phosphoenolpyruvate-dependent sugar phosphotransferase system (PTS). HprK/P also catalyzes the pyrophosphate-producing, inorganic phosphate-dependent dephosphorylation (phosphorolysis) of seryl-phosphorylated HPr (P-Ser-HPr). The two antagonistic activities of HprK/P are regulated by several intracellular metabolites, which change their concentration in response to the absence or presence of rapidly metabolisable carbon sources (glucose, fructose, etc.) in the growth medium. Also phosphorylates/dephosphorylates the HPr-like catabolite repression protein crh on a specific serine residue. Therefore, by controlling the phosphorylation state of HPr and crh, HPrK/P is a sensor enzyme that plays a major role in the regulation of carbon metabolism and sugar transport: it mediates carbon catabolite repression (CCR), and regulates PTS-catalyzed carbohydrate uptake and inducer exclusion. In Bacillus mycoides (strain KBAB4) (Bacillus weihenstephanensis), this protein is HPr kinase/phosphorylase.